Here is a 331-residue protein sequence, read N- to C-terminus: Ferredoxin--NADP reductase 2 (331 aa).

FAD is bound by residues Glu-37, Gln-45, Tyr-50, Val-90, Phe-124, Asp-285, and Thr-326.

It belongs to the ferredoxin--NADP reductase type 2 family. Homodimer. Requires FAD as cofactor.

It catalyses the reaction 2 reduced [2Fe-2S]-[ferredoxin] + NADP(+) + H(+) = 2 oxidized [2Fe-2S]-[ferredoxin] + NADPH. This Bacillus velezensis (strain DSM 23117 / BGSC 10A6 / LMG 26770 / FZB42) (Bacillus amyloliquefaciens subsp. plantarum) protein is Ferredoxin--NADP reductase 2.